A 156-amino-acid polypeptide reads, in one-letter code: Small ribosomal subunit protein uS7 (156 aa).

It belongs to the universal ribosomal protein uS7 family. As to quaternary structure, part of the 30S ribosomal subunit. Contacts proteins S9 and S11.

One of the primary rRNA binding proteins, it binds directly to 16S rRNA where it nucleates assembly of the head domain of the 30S subunit. Is located at the subunit interface close to the decoding center, probably blocks exit of the E-site tRNA. The protein is Small ribosomal subunit protein uS7 of Desulfosudis oleivorans (strain DSM 6200 / JCM 39069 / Hxd3) (Desulfococcus oleovorans).